We begin with the raw amino-acid sequence, 84 residues long: Large ribosomal subunit protein bL27 (84 aa).

Residues 1–22 (MAHKKAGGSTRNGRDSESKRLG) are disordered.

Belongs to the bacterial ribosomal protein bL27 family.

In Shewanella frigidimarina (strain NCIMB 400), this protein is Large ribosomal subunit protein bL27.